Here is a 461-residue protein sequence, read N- to C-terminus: Bifunctional protein HldE (461 aa).

The tract at residues 1-311 is ribokinase; the sequence is MKKILVVGDL…EEIALILNQT (311 aa). 191 to 194 is an ATP binding site; sequence NRAE. The active site involves D260. Residues 332–461 form a cytidylyltransferase region; sequence FTNGCFDLLH…IEKIKRTHND (130 aa).

It in the N-terminal section; belongs to the carbohydrate kinase PfkB family. This sequence in the C-terminal section; belongs to the cytidylyltransferase family. Homodimer.

It carries out the reaction D-glycero-beta-D-manno-heptose 7-phosphate + ATP = D-glycero-beta-D-manno-heptose 1,7-bisphosphate + ADP + H(+). The catalysed reaction is D-glycero-beta-D-manno-heptose 1-phosphate + ATP + H(+) = ADP-D-glycero-beta-D-manno-heptose + diphosphate. It participates in nucleotide-sugar biosynthesis; ADP-L-glycero-beta-D-manno-heptose biosynthesis; ADP-L-glycero-beta-D-manno-heptose from D-glycero-beta-D-manno-heptose 7-phosphate: step 1/4. Its pathway is nucleotide-sugar biosynthesis; ADP-L-glycero-beta-D-manno-heptose biosynthesis; ADP-L-glycero-beta-D-manno-heptose from D-glycero-beta-D-manno-heptose 7-phosphate: step 3/4. Functionally, catalyzes the phosphorylation of D-glycero-D-manno-heptose 7-phosphate at the C-1 position to selectively form D-glycero-beta-D-manno-heptose-1,7-bisphosphate. Its function is as follows. Catalyzes the ADP transfer from ATP to D-glycero-beta-D-manno-heptose 1-phosphate, yielding ADP-D-glycero-beta-D-manno-heptose. This Helicobacter pylori (strain P12) protein is Bifunctional protein HldE.